Consider the following 118-residue polypeptide: Holo-[acyl-carrier-protein] synthase (118 aa).

The Mg(2+) site is built by aspartate 8 and glutamate 58.

Belongs to the P-Pant transferase superfamily. AcpS family. The cofactor is Mg(2+).

The protein resides in the cytoplasm. It carries out the reaction apo-[ACP] + CoA = holo-[ACP] + adenosine 3',5'-bisphosphate + H(+). Functionally, transfers the 4'-phosphopantetheine moiety from coenzyme A to a Ser of acyl-carrier-protein. This Streptococcus equi subsp. zooepidemicus (strain H70) protein is Holo-[acyl-carrier-protein] synthase.